The following is a 72-amino-acid chain: Cytochrome b-c1 complex subunit 8-1, mitochondrial (72 aa).

Topologically, residues 1-41 are mitochondrial matrix; that stretch reads MGKQPVKLKAVVYALSPFQQKIMTGLWKDLPEKIHHKVSEN. Residues 42-58 traverse the membrane as a helical segment; sequence WISATLLVTPVVGTYWY. Over 59–72 the chain is Mitochondrial intermembrane; sequence AQYFKEQEKLEHRF.

Belongs to the UQCRQ/QCR8 family. In terms of assembly, component of the ubiquinol-cytochrome c oxidoreductase (cytochrome b-c1 complex, complex III, CIII), a multisubunit enzyme composed of 10 subunits. The complex is composed of 3 respiratory subunits cytochrome b (MT-CYB), cytochrome c1 (CYC1-1 or CYC1-2) and Rieske protein (UCR1-1 or UCR1-2), 2 core protein subunits MPPalpha1 (or MPPalpha2) and MPPB, and 5 low-molecular weight protein subunits QCR7-1 (or QCR7-2), UCRQ-1 (or UCRQ-2), QCR9, UCRY and probably QCR6-1 (or QCR6-2). The complex exists as an obligatory dimer and forms supercomplexes (SCs) in the inner mitochondrial membrane with NADH-ubiquinone oxidoreductase (complex I, CI), resulting in different assemblies (supercomplexes SCI(1)III(2) and SCI(2)III(4)).

Its subcellular location is the mitochondrion inner membrane. Component of the ubiquinol-cytochrome c oxidoreductase, a multisubunit transmembrane complex that is part of the mitochondrial electron transport chain which drives oxidative phosphorylation. The respiratory chain contains 3 multisubunit complexes succinate dehydrogenase (complex II, CII), ubiquinol-cytochrome c oxidoreductase (cytochrome b-c1 complex, complex III, CIII) and cytochrome c oxidase (complex IV, CIV), that cooperate to transfer electrons derived from NADH and succinate to molecular oxygen, creating an electrochemical gradient over the inner membrane that drives transmembrane transport and the ATP synthase. The cytochrome b-c1 complex catalyzes electron transfer from ubiquinol to cytochrome c, linking this redox reaction to translocation of protons across the mitochondrial inner membrane, with protons being carried across the membrane as hydrogens on the quinol. In the process called Q cycle, 2 protons are consumed from the matrix, 4 protons are released into the intermembrane space and 2 electrons are passed to cytochrome c. The polypeptide is Cytochrome b-c1 complex subunit 8-1, mitochondrial (UCRQ-1) (Arabidopsis thaliana (Mouse-ear cress)).